The chain runs to 383 residues: Probable L-aspartate decarboxylase (383 aa).

N6-(pyridoxal phosphate)lysine is present on K231.

It belongs to the group II decarboxylase family. MfnA subfamily. The cofactor is pyridoxal 5'-phosphate.

The enzyme catalyses L-aspartate + H(+) = beta-alanine + CO2. The protein operates within cofactor biosynthesis; coenzyme A biosynthesis. Catalyzes the decarboxylation of L-aspartate to produce beta-alanine. This chain is Probable L-aspartate decarboxylase, found in Thermococcus gammatolerans (strain DSM 15229 / JCM 11827 / EJ3).